Reading from the N-terminus, the 324-residue chain is Hairy/enhancer-of-split related with YRPW motif protein 2 (324 aa).

Positions 1-34 are disordered; sequence MKRPCEDSTSDSDMDETIDVGSENNYSGQSNGSF. Residues 8 to 18 show a composition bias toward acidic residues; sequence STSDSDMDETI. Positions 22 to 34 are enriched in polar residues; sequence SENNYSGQSNGSF. One can recognise a bHLH domain in the interval 48 to 103; sequence ARKKRRGIIEKRRRDRINNSLSELRRLVPTAFEKQGSAKLEKAEILQMTVDHLKML. In terms of domain architecture, Orange spans 122 to 157; it reads LSIGFRECLTEVARYLSSVEGLDSSDPLRVRLVSHL. Positions 294-311 are enriched in low complexity; that stretch reads SSSVSTSTTSQQSSGSSS. The interval 294–324 is disordered; sequence SSSVSTSTTSQQSSGSSSKPYRPWGTEVGAF. Residues 314–317 carry the YRPW motif motif; the sequence is YRPW.

Belongs to the HEY family.

The protein localises to the nucleus. Functionally, transcriptional repressor. Downstream effector of Notch signaling which regulates cell fate choice in angioblasts. Represses the venous cell fate, thereby promoting the arterial cell fate and aorta formation. The sequence is that of Hairy/enhancer-of-split related with YRPW motif protein 2 (hey2) from Danio rerio (Zebrafish).